A 475-amino-acid chain; its full sequence is Ribulose bisphosphate carboxylase large chain (475 aa).

Residues 1–2 constitute a propeptide that is removed on maturation; the sequence is MS. Pro-3 carries the post-translational modification N-acetylproline. Lys-14 is subject to N6,N6,N6-trimethyllysine. Residues Asn-123 and Thr-173 each contribute to the substrate site. The Proton acceptor role is filled by Lys-175. Position 177 (Lys-177) interacts with substrate. 3 residues coordinate Mg(2+): Lys-201, Asp-203, and Glu-204. Lys-201 is modified (N6-carboxylysine). Residue His-294 is the Proton acceptor of the active site. Substrate contacts are provided by Arg-295, His-327, and Ser-379.

The protein belongs to the RuBisCO large chain family. Type I subfamily. Heterohexadecamer of 8 large chains and 8 small chains; disulfide-linked. The disulfide link is formed within the large subunit homodimers. The cofactor is Mg(2+). Post-translationally, the disulfide bond which can form in the large chain dimeric partners within the hexadecamer appears to be associated with oxidative stress and protein turnover.

It is found in the plastid. It localises to the chloroplast. The enzyme catalyses 2 (2R)-3-phosphoglycerate + 2 H(+) = D-ribulose 1,5-bisphosphate + CO2 + H2O. It catalyses the reaction D-ribulose 1,5-bisphosphate + O2 = 2-phosphoglycolate + (2R)-3-phosphoglycerate + 2 H(+). Functionally, ruBisCO catalyzes two reactions: the carboxylation of D-ribulose 1,5-bisphosphate, the primary event in carbon dioxide fixation, as well as the oxidative fragmentation of the pentose substrate in the photorespiration process. Both reactions occur simultaneously and in competition at the same active site. The polypeptide is Ribulose bisphosphate carboxylase large chain (Citrus sinensis (Sweet orange)).